The chain runs to 158 residues: Cyclic pyranopterin monophosphate synthase (158 aa).

Residues 76–78 (LCH) and 114–115 (ME) contribute to the substrate site. The active site involves D129.

This sequence belongs to the MoaC family. Homohexamer; trimer of dimers.

It catalyses the reaction (8S)-3',8-cyclo-7,8-dihydroguanosine 5'-triphosphate = cyclic pyranopterin phosphate + diphosphate. It participates in cofactor biosynthesis; molybdopterin biosynthesis. Functionally, catalyzes the conversion of (8S)-3',8-cyclo-7,8-dihydroguanosine 5'-triphosphate to cyclic pyranopterin monophosphate (cPMP). This is Cyclic pyranopterin monophosphate synthase from Shewanella piezotolerans (strain WP3 / JCM 13877).